The sequence spans 862 residues: Protein argonaute-2 (862 aa).

The PAZ domain occupies 232 to 351 (PVIEFMCEVL…LPLEVCNIVA (120 aa)). 2 interaction with guide RNA regions span residues 314 to 319 (YFKDRH) and 527 to 569 (GKTP…LCLK). A Piwi domain is found at 520-821 (LVVVILPGKT…VAFRARYHLV (302 aa)). Residues 590–593 (FQQP) are interaction with GW182 family members. A divalent metal cation is bound at residue Asp600. Positions 653-663 (LIQFYKSTRFK) are interaction with GW182 family members. Residue Asp672 coordinates a divalent metal cation. Interaction with guide RNA stretches follow at residues 712–713 (KR), 756–764 (HAGIQGTSR), and 793–815 (YVRCTRSVSIPAPAYYAHLVAFR). His810 is a binding site for a divalent metal cation. The tract at residues 825–847 (HDSAEGSHTSGQSNGRDQQALAK) is disordered. Positions 830-841 (GSHTSGQSNGRD) are enriched in polar residues.

Belongs to the argonaute family. Ago subfamily. As to quaternary structure, component of the RISC loading complex (RLC), or micro-RNA (miRNA) loading complex (miRLC), which is composed of dicer1, ago2 and tarbp2. Note that the trimeric RLC/miRLC is also referred to as RISC. It depends on Mg(2+) as a cofactor. Mn(2+) serves as cofactor.

It is found in the cytoplasm. It localises to the P-body. The enzyme catalyses Endonucleolytic cleavage to 5'-phosphomonoester.. Required for RNA-mediated gene silencing (RNAi) by the RNA-induced silencing complex (RISC). The 'minimal RISC' appears to include ago2 bound to a short guide RNA such as a microRNA (miRNA) or short interfering RNA (siRNA). These guide RNAs direct RISC to complementary mRNAs that are targets for RISC-mediated gene silencing. The precise mechanism of gene silencing depends on the degree of complementarity between the miRNA or siRNA and its target. Binding of RISC to a perfectly complementary mRNA generally results in silencing due to endonucleolytic cleavage of the mRNA specifically by ago2. Binding of RISC to a partially complementary mRNA results in silencing through inhibition of translation, and this is independent of endonuclease activity. The inhibition of translational initiation leads to the accumulation of the affected mRNA in cytoplasmic processing bodies (P-bodies), where mRNA degradation may subsequently occur. This Xenopus laevis (African clawed frog) protein is Protein argonaute-2 (ago2).